The primary structure comprises 519 residues: Cytochrome P450 72C1 (519 aa).

The chain crosses the membrane as a helical span at residues 10 to 30; it reads VFLIGFLILILNWVWRAVNWV. Heme is bound at residue Cys-467.

The protein belongs to the cytochrome P450 family. Requires heme as cofactor. In terms of tissue distribution, expressed in hypocotyls, roots, cotyledons, stamens and silique junctions.

Its subcellular location is the membrane. In terms of biological role, atypical cytochrome P450 involved in brassinosteroids (BRs) inactivation and regulation of BRs homeostasis. Does not possess carbon 26 hydroxylase activity and may inactivate BRs by hydroxylation of carbons other than C-26. Acts in association with CYP734A1 to inactivate BRs and modulate photomorphogenesis. The chain is Cytochrome P450 72C1 (CYP72C1) from Arabidopsis thaliana (Mouse-ear cress).